A 242-amino-acid chain; its full sequence is Ribonuclease 3 (242 aa).

The region spanning 7–136 (LEALQNLLGY…LLASIYLDGG (130 aa)) is the RNase III domain. Glutamate 49 contributes to the Mg(2+) binding site. The active site involves aspartate 53. Residues aspartate 122 and glutamate 125 each contribute to the Mg(2+) site. Residue glutamate 125 is part of the active site. A DRBM domain is found at 167 to 236 (DYKTQLQELT…AEKALQIIAA (70 aa)).

Belongs to the ribonuclease III family. In terms of assembly, homodimer. Mg(2+) serves as cofactor.

Its subcellular location is the cytoplasm. The catalysed reaction is Endonucleolytic cleavage to 5'-phosphomonoester.. In terms of biological role, digests double-stranded RNA. Involved in the processing of primary rRNA transcript to yield the immediate precursors to the large and small rRNAs (23S and 16S). Processes some mRNAs, and tRNAs when they are encoded in the rRNA operon. Processes pre-crRNA and tracrRNA of type II CRISPR loci if present in the organism. In Syntrophobacter fumaroxidans (strain DSM 10017 / MPOB), this protein is Ribonuclease 3.